Here is a 445-residue protein sequence, read N- to C-terminus: Rab GDP dissociation inhibitor beta (445 aa).

N-acetylmethionine is present on Met-1. N6-succinyllysine is present on Lys-57. Residue Lys-112 is modified to N6-acetyllysine. Phosphoserine is present on Ser-130. Lys-269 is modified (N6-acetyllysine). Ser-382 carries the phosphoserine modification.

The protein belongs to the Rab GDI family. In terms of assembly, interacts with RHOH. Interacts with the GDP-bound inactive forms of RAB3A, RAB3B, RAB3C, RAB5A, RAB5B, RAB5C, RAB8A, RAB8B, RAB10, RAB12, RAB35, and RAB43; binds RAB3D to a lesser extent. Interacts with DZIP1; this interaction negatively regulates the interaction of GDI2 with GDP-bound RAB8A. In terms of tissue distribution, ubiquitously expressed.

The protein resides in the cytoplasm. It localises to the membrane. It is found in the golgi apparatus. The protein localises to the trans-Golgi network. Functionally, GDP-dissociation inhibitor preventing the GDP to GTP exchange of most Rab proteins. By keeping these small GTPases in their inactive GDP-bound form regulates intracellular membrane trafficking. Negatively regulates protein transport to the cilium and ciliogenesis through the inhibition of RAB8A. The chain is Rab GDP dissociation inhibitor beta (GDI2) from Bos taurus (Bovine).